Reading from the N-terminus, the 260-residue chain is Tryptophan synthase alpha chain (260 aa).

Residues Glu52 and Asp63 each act as proton acceptor in the active site.

Belongs to the TrpA family. Tetramer of two alpha and two beta chains.

It carries out the reaction (1S,2R)-1-C-(indol-3-yl)glycerol 3-phosphate + L-serine = D-glyceraldehyde 3-phosphate + L-tryptophan + H2O. The protein operates within amino-acid biosynthesis; L-tryptophan biosynthesis; L-tryptophan from chorismate: step 5/5. In terms of biological role, the alpha subunit is responsible for the aldol cleavage of indoleglycerol phosphate to indole and glyceraldehyde 3-phosphate. The polypeptide is Tryptophan synthase alpha chain (Streptococcus thermophilus (strain ATCC BAA-491 / LMD-9)).